Consider the following 335-residue polypeptide: Glucan endo-1,3-beta-glucosidase, acidic isoform (335 aa).

The first 29 residues, 1–29 (MARQGVIASMHALALLLGAFAAIPTGVQS), serve as a signal peptide directing secretion. Glu122 (proton donor) is an active-site residue. The Nucleophile role is filled by Glu259.

This sequence belongs to the glycosyl hydrolase 17 family. In terms of tissue distribution, accumulates in aleurone layers. Much lower levels are found in the embryo, and none in starchy endosperm.

It localises to the secreted. It is found in the extracellular space. It carries out the reaction Hydrolysis of (1-&gt;3)-beta-D-glucosidic linkages in (1-&gt;3)-beta-D-glucans.. Its function is as follows. Is thought to be an important plant defense-related product against fungal pathogens. The protein is Glucan endo-1,3-beta-glucosidase, acidic isoform of Zea mays (Maize).